We begin with the raw amino-acid sequence, 228 residues long: Leucyl/phenylalanyl-tRNA--protein transferase (228 aa).

It belongs to the L/F-transferase family.

It localises to the cytoplasm. It catalyses the reaction N-terminal L-lysyl-[protein] + L-leucyl-tRNA(Leu) = N-terminal L-leucyl-L-lysyl-[protein] + tRNA(Leu) + H(+). It carries out the reaction N-terminal L-arginyl-[protein] + L-leucyl-tRNA(Leu) = N-terminal L-leucyl-L-arginyl-[protein] + tRNA(Leu) + H(+). The enzyme catalyses L-phenylalanyl-tRNA(Phe) + an N-terminal L-alpha-aminoacyl-[protein] = an N-terminal L-phenylalanyl-L-alpha-aminoacyl-[protein] + tRNA(Phe). In terms of biological role, functions in the N-end rule pathway of protein degradation where it conjugates Leu, Phe and, less efficiently, Met from aminoacyl-tRNAs to the N-termini of proteins containing an N-terminal arginine or lysine. The protein is Leucyl/phenylalanyl-tRNA--protein transferase of Sulfurimonas denitrificans (strain ATCC 33889 / DSM 1251) (Thiomicrospira denitrificans (strain ATCC 33889 / DSM 1251)).